A 318-amino-acid polypeptide reads, in one-letter code: Glutathione synthetase (318 aa).

The region spanning 128–313 (KLAILNFSRF…VAAMFADAVA (186 aa)) is the ATP-grasp domain. 154 to 210 (LKEHGDIIIKPLDGMGGMGIFRLTEKDPNIGSILETLMQLDSRTIMAQRYIPEIVHG) serves as a coordination point for ATP. 2 residues coordinate Mg(2+): E284 and N286.

It belongs to the prokaryotic GSH synthase family. Mg(2+) is required as a cofactor. Mn(2+) serves as cofactor.

It catalyses the reaction gamma-L-glutamyl-L-cysteine + glycine + ATP = glutathione + ADP + phosphate + H(+). Its pathway is sulfur metabolism; glutathione biosynthesis; glutathione from L-cysteine and L-glutamate: step 2/2. This is Glutathione synthetase from Neisseria meningitidis serogroup A / serotype 4A (strain DSM 15465 / Z2491).